Reading from the N-terminus, the 61-residue chain is Small ribosomal subunit protein uS14 (61 aa).

Residues cysteine 24, cysteine 27, cysteine 40, and cysteine 43 each contribute to the Zn(2+) site.

This sequence belongs to the universal ribosomal protein uS14 family. Zinc-binding uS14 subfamily. Part of the 30S ribosomal subunit. Contacts proteins S3 and S10. Zn(2+) is required as a cofactor.

Binds 16S rRNA, required for the assembly of 30S particles and may also be responsible for determining the conformation of the 16S rRNA at the A site. The chain is Small ribosomal subunit protein uS14 from Nitratiruptor sp. (strain SB155-2).